Here is a 261-residue protein sequence, read N- to C-terminus: 1,6-dihydroxycyclohexa-2,4-diene-1-carboxylate dehydrogenase (261 aa).

Residue Ile-13 to Ile-37 participates in NAD(+) binding. Ser-145 serves as a coordination point for substrate. The Proton acceptor role is filled by Tyr-156.

It belongs to the short-chain dehydrogenases/reductases (SDR) family. In terms of assembly, homodimer.

The enzyme catalyses (1R,6S)-1,6-dihydroxycyclohexa-2,4-diene-1-carboxylate + NAD(+) = catechol + CO2 + NADH. Its pathway is aromatic compound metabolism; benzoate degradation via hydroxylation; catechol from benzoate: step 2/2. Its function is as follows. Degradation of 2-hydro-1,2-dihydroxy benzoate (DHB) to catechol. This chain is 1,6-dihydroxycyclohexa-2,4-diene-1-carboxylate dehydrogenase (benD), found in Acinetobacter baylyi (strain ATCC 33305 / BD413 / ADP1).